A 185-amino-acid chain; its full sequence is Ribosome-recycling factor (185 aa).

Belongs to the RRF family.

It is found in the cytoplasm. Its function is as follows. Responsible for the release of ribosomes from messenger RNA at the termination of protein biosynthesis. May increase the efficiency of translation by recycling ribosomes from one round of translation to another. This is Ribosome-recycling factor from Kineococcus radiotolerans (strain ATCC BAA-149 / DSM 14245 / SRS30216).